Here is a 142-residue protein sequence, read N- to C-terminus: Large ribosomal subunit protein uL13 (142 aa).

Belongs to the universal ribosomal protein uL13 family. Part of the 50S ribosomal subunit.

Functionally, this protein is one of the early assembly proteins of the 50S ribosomal subunit, although it is not seen to bind rRNA by itself. It is important during the early stages of 50S assembly. In Acidithiobacillus ferrooxidans (strain ATCC 23270 / DSM 14882 / CIP 104768 / NCIMB 8455) (Ferrobacillus ferrooxidans (strain ATCC 23270)), this protein is Large ribosomal subunit protein uL13.